Consider the following 563-residue polypeptide: Tripeptidyl-peptidase 1 (563 aa).

An N-terminal signal peptide occupies residues 1–19 (MGLQACLLGLFALILSGKC). A propeptide spans 20-195 (SYSPEPDQRR…PEPQVTGTVG (176 aa)) (removed in mature form). Cysteine 111 and cysteine 122 are disulfide-bonded. Positions 199–563 (GVTPSVIRKR…PALLKTLLNP (365 aa)) constitute a Peptidase S53 domain. Residues asparagine 210 and asparagine 222 are each glycosylated (N-linked (GlcNAc...) asparagine). Residues glutamate 272 and aspartate 276 each act as charge relay system in the active site. N-linked (GlcNAc...) asparagine glycosylation is found at asparagine 286, asparagine 313, and asparagine 443. Intrachain disulfides connect cysteine 365-cysteine 526 and cysteine 522-cysteine 537. Serine 475 serves as the catalytic Charge relay system. Positions 517 and 518 each coordinate Ca(2+). Ca(2+)-binding residues include glycine 539, glycine 541, and aspartate 543.

As to quaternary structure, monomer. Interacts with CLN5. Interacts with CLN3. Ca(2+) is required as a cofactor. Post-translationally, activated by autocatalytic proteolytical processing upon acidification. N-glycosylation is required for processing and activity. In terms of tissue distribution, detected in all tissues examined with highest levels in heart and placenta and relatively similar levels in other tissues.

It localises to the lysosome. Its subcellular location is the melanosome. The catalysed reaction is Release of an N-terminal tripeptide from a polypeptide, but also has endopeptidase activity.. With respect to regulation, inhibited by diisopropyl fluorophosphate (DFP). Its function is as follows. Lysosomal serine protease with tripeptidyl-peptidase I activity. May act as a non-specific lysosomal peptidase which generates tripeptides from the breakdown products produced by lysosomal proteinases. Requires substrates with an unsubstituted N-terminus. This chain is Tripeptidyl-peptidase 1 (TPP1), found in Homo sapiens (Human).